Here is a 154-residue protein sequence, read N- to C-terminus: Myoglobin (154 aa).

Positions 2-148 (GLSDGEWQLV…FRKDMASNYK (147 aa)) constitute a Globin domain. Ser4 carries the post-translational modification Phosphoserine. His65 is a nitrite binding site. His65 serves as a coordination point for O2. Position 68 is a phosphothreonine (Thr68). A heme b-binding site is contributed by His94.

This sequence belongs to the globin family. Monomeric.

Its subcellular location is the cytoplasm. It is found in the sarcoplasm. It catalyses the reaction Fe(III)-heme b-[protein] + nitric oxide + H2O = Fe(II)-heme b-[protein] + nitrite + 2 H(+). The catalysed reaction is H2O2 + AH2 = A + 2 H2O. Its function is as follows. Monomeric heme protein which primary function is to store oxygen and facilitate its diffusion within muscle tissues. Reversibly binds oxygen through a pentacoordinated heme iron and enables its timely and efficient release as needed during periods of heightened demand. Depending on the oxidative conditions of tissues and cells, and in addition to its ability to bind oxygen, it also has a nitrite reductase activity whereby it regulates the production of bioactive nitric oxide. Under stress conditions, like hypoxia and anoxia, it also protects cells against reactive oxygen species thanks to its pseudoperoxidase activity. The polypeptide is Myoglobin (MB) (Pongo pygmaeus (Bornean orangutan)).